We begin with the raw amino-acid sequence, 444 residues long: Tubulin gamma chain (444 aa).

Serine 144–glycine 150 contributes to the GTP binding site.

This sequence belongs to the tubulin family.

It is found in the cytoplasm. The protein localises to the cytoskeleton. It localises to the microtubule organizing center. The protein resides in the centrosome. Its subcellular location is the cell junction. It is found in the hemidesmosome. The protein localises to the adherens junction. Tubulin is the major constituent of microtubules. The gamma chain is found at microtubule organizing centers (MTOC) such as the spindle poles or the centrosome, suggesting that it is involved in the minus-end nucleation of microtubule assembly. This is Tubulin gamma chain (tbg-1) from Caenorhabditis elegans.